Reading from the N-terminus, the 111-residue chain is Large ribosomal subunit protein uL22 (111 aa).

The protein belongs to the universal ribosomal protein uL22 family. In terms of assembly, part of the 50S ribosomal subunit.

Its function is as follows. This protein binds specifically to 23S rRNA; its binding is stimulated by other ribosomal proteins, e.g. L4, L17, and L20. It is important during the early stages of 50S assembly. It makes multiple contacts with different domains of the 23S rRNA in the assembled 50S subunit and ribosome. Functionally, the globular domain of the protein is located near the polypeptide exit tunnel on the outside of the subunit, while an extended beta-hairpin is found that lines the wall of the exit tunnel in the center of the 70S ribosome. This is Large ribosomal subunit protein uL22 from Xylella fastidiosa (strain 9a5c).